The following is a 1055-amino-acid chain: Focal adhesion kinase 1 (1055 aa).

Residues 1 to 29 (MAAAYLDPNLNHTPSSSTKTHLGTGTERS) form a disordered region. Ala-2 bears the N-acetylalanine mark. A Phosphotyrosine modification is found at Tyr-5. The span at 10–27 (LNHTPSSSTKTHLGTGTE) shows a compositional bias: polar residues. Position 13 is a phosphothreonine (Thr-13). 2 positions are modified to phosphoserine: Ser-29 and Ser-54. The 321-residue stretch at 35–355 (RVLKVFHYFE…GYCRLVNGAT (321 aa)) folds into the FERM domain. Lys-152 is covalently cross-linked (Glycyl lysine isopeptide (Lys-Gly) (interchain with G-Cter in SUMO)). Phosphotyrosine; by autocatalysis is present on Tyr-397. Phosphotyrosine is present on Tyr-407. A Protein kinase domain is found at 422 to 680 (IELGRCIGEG…ELKAQLSTIL (259 aa)). ATP contacts are provided by residues 428 to 434 (IGEGQFG), Lys-454, and 500 to 502 (ELC). Asp-546 (proton acceptor) is an active-site residue. Tyr-570 and Tyr-576 each carry phosphotyrosine. Tyr-577 bears the Phosphotyrosine; by RET and SRC mark. Position 580 is a phosphoserine (Ser-580). Residues 685–697 (VQQEERMRMESRR) are compositionally biased toward basic and acidic residues. Disordered regions lie at residues 685 to 734 (VQQE…PSPQ) and 837 to 923 (VRLS…LDRS). Residues 707-1055 (GSDEAPPKPS…LKMLGQTRPH (349 aa)) are interaction with TGFB1I1. At Ser-722 the chain carries Phosphoserine. Ser-732 carries the phosphoserine; by CDK5 modification. Positions 837 to 849 (VRLSRGSIDREDG) are enriched in basic and acidic residues. A Phosphoserine modification is found at Ser-843. Tyr-861 carries the post-translational modification Phosphotyrosine. Positions 869–880 (PAAPPKKPPRPG) are enriched in pro residues. Residues 886–896 (SNLSSISSPAE) show a composition bias toward polar residues. At Ser-913 the chain carries Phosphoserine. An interaction with ARHGEF28 region spans residues 915 to 1055 (PPTANLDRSN…LKMLGQTRPH (141 aa)). Thr-917 is modified (phosphothreonine). Tyr-928 carries the post-translational modification Phosphotyrosine.

The protein belongs to the protein kinase superfamily. Tyr protein kinase family. FAK subfamily. Interacts with GIT1. Component of a complex that contains at least FER, CTTN and PTK2/FAK1. Interacts with BMX. Interacts with STEAP4. Interacts with ZFYVE21. Interacts with ESR1. Interacts with PIK3R1 or PIK3R2. Interacts with FGR, FLT4 and RET. Interacts with EPHA2 in resting cells; activation of EPHA2 recruits PTPN11, leading to dephosphorylation of PTK2/FAK1 and dissociation of the complex. Interacts with EPHA1 (kinase activity-dependent). Interacts with P53/TP53. Interacts (via first Pro-rich region) with CAS family members (via SH3 domain), including BCAR1, BCAR3, and CASS4. Interacts with NEDD9 (via SH3 domain). Interacts with TGFB1I1. Interacts with SRC, GRB2 and GRB7. Interacts with ARHGEF28. Interacts with SHB. Part of a complex composed of THSD1, PTK2/FAK1, TLN1 and VCL. Interacts with PXN and TLN1. Interacts with SORBS1. Interacts with STAT1. Interacts with WASL. Interacts with ARHGAP26 and SHC1. Interacts with RB1CC1; this inhibits PTK2/FAK1 activity and activation of downstream signaling pathways. Interacts with ARHGEF7. Interacts with MDM2. Interacts with PIAS1. Interacts with DCC. Interacts with LPXN (via LD motif 3). Interacts with MISP. Interacts with EMP2; regulates PTK2 activation and localization. Interacts with DSCAM. Interacts with AMBRA1. Interacts (when tyrosine-phosphorylated) with tensin TNS1; the interaction is increased by phosphorylation of TNS1. Phosphorylated on tyrosine residues upon activation, e.g. upon integrin signaling. Tyr-397 is the major autophosphorylation site, but other kinases can also phosphorylate this residue. Phosphorylation at Tyr-397 promotes interaction with SRC and SRC family members, leading to phosphorylation at Tyr-576, Tyr-577 and at additional tyrosine residues. FGR promotes phosphorylation at Tyr-397 and Tyr-576. FER promotes phosphorylation at Tyr-577, Tyr-861 and Tyr-928, even when cells are not adherent. Tyr-397, Tyr-576 and Ser-722 are phosphorylated only when cells are adherent. Phosphorylation at Tyr-397 is important for interaction with BMX, PIK3R1 and SHC1. Phosphorylation at Tyr-928 is important for interaction with GRB2. Dephosphorylated by PTPN11; PTPN11 is recruited to PTK2 via EPHA2 (tyrosine phosphorylated). Microtubule-induced dephosphorylation at Tyr-397 is crucial for the induction of focal adhesion disassembly; this dephosphorylation could be catalyzed by PTPN11 and regulated by ZFYVE21. Phosphorylation on tyrosine residues is enhanced by NTN1. In terms of processing, sumoylated; this enhances autophosphorylation.

Its subcellular location is the cell junction. The protein localises to the focal adhesion. It localises to the cell membrane. The protein resides in the cytoplasm. It is found in the perinuclear region. Its subcellular location is the cell cortex. The protein localises to the cytoskeleton. It localises to the microtubule organizing center. The protein resides in the centrosome. It is found in the nucleus. Its subcellular location is the cilium basal body. The enzyme catalyses L-tyrosyl-[protein] + ATP = O-phospho-L-tyrosyl-[protein] + ADP + H(+). With respect to regulation, subject to autoinhibition, mediated by interactions between the FERM domain and the kinase domain. Activated by autophosphorylation at Tyr-397. This promotes interaction with SRC and phosphorylation at Tyr-576 and Tyr-577 in the kinase activation loop by SRC. Phosphorylation at Tyr-397, Tyr-576 and Tyr-577 is required for maximal kinase activity. Functionally, non-receptor protein-tyrosine kinase that plays an essential role in regulating cell migration, adhesion, spreading, reorganization of the actin cytoskeleton, formation and disassembly of focal adhesions and cell protrusions, cell cycle progression, cell proliferation and apoptosis. Required for early embryonic development and placenta development. Required for embryonic angiogenesis, normal cardiomyocyte migration and proliferation, and normal heart development. Regulates axon growth and neuronal cell migration, axon branching and synapse formation; required for normal development of the nervous system. Plays a role in osteogenesis and differentiation of osteoblasts. Functions in integrin signal transduction, but also in signaling downstream of numerous growth factor receptors, G-protein coupled receptors (GPCR), EPHA2, netrin receptors and LDL receptors. Forms multisubunit signaling complexes with SRC and SRC family members upon activation; this leads to the phosphorylation of additional tyrosine residues, creating binding sites for scaffold proteins, effectors and substrates. Regulates numerous signaling pathways. Promotes activation of phosphatidylinositol 3-kinase and the AKT1 signaling cascade. Promotes activation of MAPK1/ERK2, MAPK3/ERK1 and the MAP kinase signaling cascade. Promotes localized and transient activation of guanine nucleotide exchange factors (GEFs) and GTPase-activating proteins (GAPs), and thereby modulates the activity of Rho family GTPases. Signaling via CAS family members mediates activation of RAC1. Phosphorylates NEDD9 following integrin stimulation. Recruits the ubiquitin ligase MDM2 to P53/TP53 in the nucleus, and thereby regulates P53/TP53 activity, P53/TP53 ubiquitination and proteasomal degradation. Phosphorylates SRC; this increases SRC kinase activity. Phosphorylates ACTN1, ARHGEF7, GRB7, RET and WASL. Promotes phosphorylation of PXN and STAT1; most likely PXN and STAT1 are phosphorylated by a SRC family kinase that is recruited to autophosphorylated PTK2/FAK1, rather than by PTK2/FAK1 itself. Promotes phosphorylation of BCAR1; GIT2 and SHC1; this requires both SRC and PTK2/FAK1. Promotes phosphorylation of BMX and PIK3R1. In terms of biological role, does not contain a kinase domain and inhibits PTK2/FAK1 phosphorylation and signaling. Its enhanced expression can attenuate the nuclear accumulation of LPXN and limit its ability to enhance serum response factor (SRF)-dependent gene transcription. The chain is Focal adhesion kinase 1 from Rattus norvegicus (Rat).